Reading from the N-terminus, the 425-residue chain is UDP-N-acetylglucosamine 1-carboxyvinyltransferase (425 aa).

22 to 23 (KN) provides a ligand contact to phosphoenolpyruvate. Arg-93 is a UDP-N-acetyl-alpha-D-glucosamine binding site. Cys-117 functions as the Proton donor in the catalytic mechanism. Position 117 is a 2-(S-cysteinyl)pyruvic acid O-phosphothioketal (Cys-117). Residues 122–126 (RPIDL), Asp-307, and Val-329 contribute to the UDP-N-acetyl-alpha-D-glucosamine site.

Belongs to the EPSP synthase family. MurA subfamily.

The protein localises to the cytoplasm. The enzyme catalyses phosphoenolpyruvate + UDP-N-acetyl-alpha-D-glucosamine = UDP-N-acetyl-3-O-(1-carboxyvinyl)-alpha-D-glucosamine + phosphate. Its pathway is cell wall biogenesis; peptidoglycan biosynthesis. Functionally, cell wall formation. Adds enolpyruvyl to UDP-N-acetylglucosamine. In Prosthecochloris aestuarii (strain DSM 271 / SK 413), this protein is UDP-N-acetylglucosamine 1-carboxyvinyltransferase.